Consider the following 127-residue polypeptide: Photosystem II reaction center Psb28 protein (127 aa).

Positions Gly107 to Ala127 are disordered. Polar residues predominate over residues Gly109–Gln118.

This sequence belongs to the Psb28 family. Part of the photosystem II complex.

The protein resides in the cellular thylakoid membrane. The chain is Photosystem II reaction center Psb28 protein from Parasynechococcus marenigrum (strain WH8102).